The following is a 100-amino-acid chain: UPF0213 protein YhbQ (100 aa).

Positions Thr-2–Arg-77 constitute a GIY-YIG domain.

This sequence belongs to the UPF0213 family.

This Escherichia coli O127:H6 (strain E2348/69 / EPEC) protein is UPF0213 protein YhbQ.